A 333-amino-acid chain; its full sequence is Phosphate acetyltransferase (333 aa).

This sequence belongs to the phosphate acetyltransferase and butyryltransferase family. In terms of assembly, homodimer.

It localises to the cell membrane. The enzyme catalyses acetyl-CoA + phosphate = acetyl phosphate + CoA. The protein operates within metabolic intermediate biosynthesis; acetyl-CoA biosynthesis; acetyl-CoA from acetate: step 2/2. This chain is Phosphate acetyltransferase (pta), found in Methanosarcina thermophila.